Consider the following 123-residue polypeptide: Large ribosomal subunit protein uL22 (123 aa).

Belongs to the universal ribosomal protein uL22 family. Part of the 50S ribosomal subunit.

In terms of biological role, this protein binds specifically to 23S rRNA; its binding is stimulated by other ribosomal proteins, e.g. L4, L17, and L20. It is important during the early stages of 50S assembly. It makes multiple contacts with different domains of the 23S rRNA in the assembled 50S subunit and ribosome. Functionally, the globular domain of the protein is located near the polypeptide exit tunnel on the outside of the subunit, while an extended beta-hairpin is found that lines the wall of the exit tunnel in the center of the 70S ribosome. The protein is Large ribosomal subunit protein uL22 of Synechococcus sp. (strain JA-3-3Ab) (Cyanobacteria bacterium Yellowstone A-Prime).